The primary structure comprises 70 residues: Large ribosomal subunit protein bL31 (70 aa).

Zn(2+) contacts are provided by Cys16, Cys18, Cys37, and Cys40.

It belongs to the bacterial ribosomal protein bL31 family. Type A subfamily. In terms of assembly, part of the 50S ribosomal subunit. The cofactor is Zn(2+).

In terms of biological role, binds the 23S rRNA. The sequence is that of Large ribosomal subunit protein bL31 from Cronobacter sakazakii (strain ATCC BAA-894) (Enterobacter sakazakii).